The sequence spans 526 residues: Probable Xaa-Pro aminopeptidase MGG_05684 (526 aa).

4 residues coordinate Mn(2+): Asp285, Asp296, Glu447, and Glu488.

The protein belongs to the peptidase M24B family. The cofactor is Mn(2+).

It catalyses the reaction Release of any N-terminal amino acid, including proline, that is linked to proline, even from a dipeptide or tripeptide.. Its function is as follows. Catalyzes the removal of a penultimate prolyl residue from the N-termini of peptides. The polypeptide is Probable Xaa-Pro aminopeptidase MGG_05684 (Pyricularia oryzae (strain 70-15 / ATCC MYA-4617 / FGSC 8958) (Rice blast fungus)).